The primary structure comprises 241 residues: Small ribosomal subunit protein uS2 (241 aa).

The protein belongs to the universal ribosomal protein uS2 family.

This is Small ribosomal subunit protein uS2 from Erwinia tasmaniensis (strain DSM 17950 / CFBP 7177 / CIP 109463 / NCPPB 4357 / Et1/99).